The following is an 858-amino-acid chain: Adenylate cyclase, germination specific (858 aa).

Residues 1–18 (MKKTFVKILSKSYVEGYP) lie on the Cytoplasmic side of the membrane. Residues 19–41 (VGFFIGLIILAIFGSMVCIFSFM) form a helical; Signal-anchor for type II membrane protein membrane-spanning segment. At 42 to 858 (HYSEEENSNI…DENVESKKNK (817 aa)) the chain is on the extracellular side. Residues 86–317 (VNPNFDRNDF…DCVLKLWIFT (232 aa)) form the CHASE domain. The 131-residue stretch at 396-526 (CVFFLDIAGF…DTVNVASRME (131 aa)) folds into the Guanylate cyclase domain. Aspartate 401, isoleucine 402, and aspartate 445 together coordinate Mg(2+). Disordered regions lie at residues 650–691 (YYYH…YHDT), 767–803 (SDNV…STNE), and 827–858 (ENCD…KKNK). 3 stretches are compositionally biased toward low complexity: residues 767-778 (SDNVNNYENNNN), 788-797 (GDNNNINDNN), and 834-849 (DNNN…NNND).

The protein belongs to the adenylyl cyclase class-4/guanylyl cyclase family.

The protein localises to the membrane. The enzyme catalyses ATP = 3',5'-cyclic AMP + diphosphate. Insensitive to guanine nucleotides. Has a large extracellular domain which may be involved in the recognition of an extracellular signal present during germination, leading to activation or inhibition of cAMP synthesis by the cytoplasmic domain. This Dictyostelium discoideum (Social amoeba) protein is Adenylate cyclase, germination specific (acgA).